A 1104-amino-acid chain; its full sequence is Translation initiation factor IF-2 (1104 aa).

2 disordered regions span residues 51-444 (SLLG…LAAQ) and 461-497 (LARP…RRRA). Composition is skewed to low complexity over residues 60-119 (AKPA…KPQA) and 127-164 (ATPK…AAKP). Residues 189-202 (APTPRPTPARPTPR) are compositionally biased toward pro residues. 4 stretches are compositionally biased toward low complexity: residues 203–215 (PAGA…PTPG), 227–246 (GAPS…KPGA), 311–336 (STTG…PAGM), and 366–396 (PTKA…SFRP). Basic and acidic residues predominate over residues 406–420 (GRPDWDDSARLDALR). Residues 481–495 (MRKRKKETARQRQRR) show a composition bias toward basic residues. Residues 596 to 768 (RRPPVVTVMG…LLLVTEVEDL (173 aa)) form the tr-type G domain. The interval 605 to 612 (GHVDHGKT) is G1. 605-612 (GHVDHGKT) is a GTP binding site. Positions 630–634 (GITQH) are G2. The interval 655 to 658 (DTPG) is G3. GTP is bound by residues 655–659 (DTPGH) and 709–712 (NKID). Residues 709–712 (NKID) form a G4 region. Residues 745 to 747 (SAI) are G5.

Belongs to the TRAFAC class translation factor GTPase superfamily. Classic translation factor GTPase family. IF-2 subfamily.

It localises to the cytoplasm. One of the essential components for the initiation of protein synthesis. Protects formylmethionyl-tRNA from spontaneous hydrolysis and promotes its binding to the 30S ribosomal subunits. Also involved in the hydrolysis of GTP during the formation of the 70S ribosomal complex. This Synechococcus sp. (strain CC9605) protein is Translation initiation factor IF-2.